Consider the following 342-residue polypeptide: S-adenosylmethionine:tRNA ribosyltransferase-isomerase (342 aa).

This sequence belongs to the QueA family. In terms of assembly, monomer.

The protein localises to the cytoplasm. The enzyme catalyses 7-aminomethyl-7-carbaguanosine(34) in tRNA + S-adenosyl-L-methionine = epoxyqueuosine(34) in tRNA + adenine + L-methionine + 2 H(+). The protein operates within tRNA modification; tRNA-queuosine biosynthesis. Functionally, transfers and isomerizes the ribose moiety from AdoMet to the 7-aminomethyl group of 7-deazaguanine (preQ1-tRNA) to give epoxyqueuosine (oQ-tRNA). The protein is S-adenosylmethionine:tRNA ribosyltransferase-isomerase of Streptococcus sanguinis (strain SK36).